Reading from the N-terminus, the 293-residue chain is uncharacterized protein (293 aa).

A disordered region spans residues 1-22; that stretch reads MTFNEGVQIDTSTTSTSGSGGG. The helical transmembrane segment at 25–45 threads the bilayer; that stretch reads LAIGGGLGGLLVVVVAMLLGV. Positions 243–265 are disordered; it reads GDDRIQQQTTGRTNPETWTHGSA. Polar residues predominate over residues 248-265; that stretch reads QQQTTGRTNPETWTHGSA.

It localises to the membrane. This is an uncharacterized protein from Mycobacterium tuberculosis (strain CDC 1551 / Oshkosh).